The chain runs to 501 residues: UPF0288 protein Maeo_0995 (501 aa).

It belongs to the UPF0288 family.

The polypeptide is UPF0288 protein Maeo_0995 (Methanococcus aeolicus (strain ATCC BAA-1280 / DSM 17508 / OCM 812 / Nankai-3)).